A 347-amino-acid chain; its full sequence is UDP-N-acetylenolpyruvoylglucosamine reductase (347 aa).

Residues 17–187 enclose the FAD-binding PCMH-type domain; the sequence is IEQLAAQLVV…TAVGLKFAKA (171 aa). Arg163 is an active-site residue. The Proton donor role is filled by Ser232. The active site involves Glu327.

The protein belongs to the MurB family. It depends on FAD as a cofactor.

The protein resides in the cytoplasm. It carries out the reaction UDP-N-acetyl-alpha-D-muramate + NADP(+) = UDP-N-acetyl-3-O-(1-carboxyvinyl)-alpha-D-glucosamine + NADPH + H(+). The protein operates within cell wall biogenesis; peptidoglycan biosynthesis. Functionally, cell wall formation. This Vibrio cholerae serotype O1 (strain ATCC 39541 / Classical Ogawa 395 / O395) protein is UDP-N-acetylenolpyruvoylglucosamine reductase.